Consider the following 67-residue polypeptide: Alpha-conotoxin G1.5 (67 aa).

An N-terminal signal peptide occupies residues 1–21; that stretch reads MGMRMMFTVFLLVALATTVVS. A propeptide spanning residues 22–47 is cleaved from the precursor; sequence FTSDRASDRRNAAVKAFDLISSTVKK. 2 cysteine pairs are disulfide-bonded: C49–C55 and C50–C63. Q65 is modified (glutamine amide).

Belongs to the conotoxin A superfamily. In terms of tissue distribution, expressed by the venom duct.

Its subcellular location is the secreted. In terms of biological role, alpha-conotoxins act on postsynaptic membranes, they bind to the nicotinic acetylcholine receptors (nAChR) and thus inhibit them. Globular isomer (C1-C3; C2-C4) selectively inhibits neuronal (non-muscle) nAChR subtypes particularly human alpha-3-beta-2/CHRNA3-CHRNB2 (IC(50)=35.7 nM) and alpha-9-alpha-10/CHRNA9-CHRNA10 nAChRs (IC(50)=569 nM), while the ribbon isomer (C1-C4; C2-C3) shows weak inhibition on alpha-3-beta-2/CHRNA3-CHRNB2, but not on all other receptors tested. This chain is Alpha-conotoxin G1.5, found in Conus geographus (Geography cone).